A 352-amino-acid chain; its full sequence is Histidinol-phosphate aminotransferase (352 aa).

Lys-221 carries the N6-(pyridoxal phosphate)lysine modification.

The protein belongs to the class-II pyridoxal-phosphate-dependent aminotransferase family. Histidinol-phosphate aminotransferase subfamily. As to quaternary structure, homodimer. Requires pyridoxal 5'-phosphate as cofactor.

The catalysed reaction is L-histidinol phosphate + 2-oxoglutarate = 3-(imidazol-4-yl)-2-oxopropyl phosphate + L-glutamate. The protein operates within amino-acid biosynthesis; L-histidine biosynthesis; L-histidine from 5-phospho-alpha-D-ribose 1-diphosphate: step 7/9. This Staphylococcus aureus (strain MRSA252) protein is Histidinol-phosphate aminotransferase.